The following is a 288-amino-acid chain: Formamidopyrimidine-DNA glycosylase (288 aa).

Catalysis depends on Pro-2, which acts as the Schiff-base intermediate with DNA. The Proton donor role is filled by Glu-3. The active-site Proton donor; for beta-elimination activity is the Lys-58. 3 residues coordinate DNA: His-99, Arg-118, and Lys-161. The segment at 252–288 (RVYDREAEPCPREGCGGTIKRIVQAGRSTFFCAKCQR) adopts an FPG-type zinc-finger fold. The Proton donor; for delta-elimination activity role is filled by Arg-278.

This sequence belongs to the FPG family. In terms of assembly, monomer. Requires Zn(2+) as cofactor.

The catalysed reaction is Hydrolysis of DNA containing ring-opened 7-methylguanine residues, releasing 2,6-diamino-4-hydroxy-5-(N-methyl)formamidopyrimidine.. It carries out the reaction 2'-deoxyribonucleotide-(2'-deoxyribose 5'-phosphate)-2'-deoxyribonucleotide-DNA = a 3'-end 2'-deoxyribonucleotide-(2,3-dehydro-2,3-deoxyribose 5'-phosphate)-DNA + a 5'-end 5'-phospho-2'-deoxyribonucleoside-DNA + H(+). Involved in base excision repair of DNA damaged by oxidation or by mutagenic agents. Acts as a DNA glycosylase that recognizes and removes damaged bases. Has a preference for oxidized purines, such as 7,8-dihydro-8-oxoguanine (8-oxoG). Has AP (apurinic/apyrimidinic) lyase activity and introduces nicks in the DNA strand. Cleaves the DNA backbone by beta-delta elimination to generate a single-strand break at the site of the removed base with both 3'- and 5'-phosphates. This chain is Formamidopyrimidine-DNA glycosylase, found in Beijerinckia indica subsp. indica (strain ATCC 9039 / DSM 1715 / NCIMB 8712).